The primary structure comprises 113 residues: Endoribonuclease SymE (113 aa).

The region spanning 29-74 (SRYPDYSRIPAITLKGQWLEAAGFATGTVVDVKVMEGCIVLTAQPP) is the SpoVT-AbrB domain.

This sequence belongs to the SymE family.

The protein resides in the cytoplasm. Involved in the degradation and recycling of damaged RNA. It is itself a target for degradation by the ATP-dependent protease Lon. The chain is Endoribonuclease SymE from Escherichia coli (strain 55989 / EAEC).